We begin with the raw amino-acid sequence, 252 residues long: Triosephosphate isomerase (252 aa).

10–12 (NWK) lines the substrate pocket. The active-site Electrophile is H96. E168 (proton acceptor) is an active-site residue. Substrate contacts are provided by residues G174, S214, and 235–236 (GG).

Belongs to the triosephosphate isomerase family. In terms of assembly, homodimer.

Its subcellular location is the cytoplasm. It carries out the reaction D-glyceraldehyde 3-phosphate = dihydroxyacetone phosphate. It participates in carbohydrate biosynthesis; gluconeogenesis. It functions in the pathway carbohydrate degradation; glycolysis; D-glyceraldehyde 3-phosphate from glycerone phosphate: step 1/1. Involved in the gluconeogenesis. Catalyzes stereospecifically the conversion of dihydroxyacetone phosphate (DHAP) to D-glyceraldehyde-3-phosphate (G3P). The sequence is that of Triosephosphate isomerase from Streptococcus pyogenes serotype M2 (strain MGAS10270).